A 570-amino-acid polypeptide reads, in one-letter code: Urease subunit alpha (570 aa).

The 440-residue stretch at 131 to 570 (GGVDTHIHFI…LPMAQRYFLF (440 aa)) folds into the Urease domain. Residues His-136, His-138, and Lys-219 each contribute to the Ni(2+) site. N6-carboxylysine is present on Lys-219. His-221 lines the substrate pocket. Ni(2+)-binding residues include His-248 and His-274. His-322 acts as the Proton donor in catalysis. Asp-362 is a binding site for Ni(2+).

It belongs to the metallo-dependent hydrolases superfamily. Urease alpha subunit family. As to quaternary structure, heterotrimer of UreA (gamma), UreB (beta) and UreC (alpha) subunits. Three heterotrimers associate to form the active enzyme. Ni cation serves as cofactor. In terms of processing, carboxylation allows a single lysine to coordinate two nickel ions.

The protein resides in the cytoplasm. The catalysed reaction is urea + 2 H2O + H(+) = hydrogencarbonate + 2 NH4(+). It participates in nitrogen metabolism; urea degradation; CO(2) and NH(3) from urea (urease route): step 1/1. The chain is Urease subunit alpha from Methylocella silvestris (strain DSM 15510 / CIP 108128 / LMG 27833 / NCIMB 13906 / BL2).